Consider the following 64-residue polypeptide: Large ribosomal subunit protein bL35 (64 aa).

The protein belongs to the bacterial ribosomal protein bL35 family.

In Shewanella oneidensis (strain ATCC 700550 / JCM 31522 / CIP 106686 / LMG 19005 / NCIMB 14063 / MR-1), this protein is Large ribosomal subunit protein bL35.